The sequence spans 120 residues: Protein VraC (120 aa).

The protein is Protein VraC of Staphylococcus epidermidis (strain ATCC 35984 / DSM 28319 / BCRC 17069 / CCUG 31568 / BM 3577 / RP62A).